A 566-amino-acid polypeptide reads, in one-letter code: MQLKLTKTLPFSENFIMADSEEYKTVIGISFGNQNSSIAFNRDGKTDVLANEEGNRQIPSILSYHGDQEYHGVQARGQLVRNADNSVTNFRDLLGKSHDELTLHHCHYSANPVNVEGQIGFKITVQEDEESDPKEKILTAHEASVRHLRRLTESAEDFLGTKVNGCVMSVPVYFTDAQRKALESAANEAGLPVLQLIHDPAAVILALMYSEEVLIDKTVVVANFGATRSEVSVVSVKGGLMTILASVHDENLGGEQLTDVLVNFFAKEFEKKNGIDPRKNARSLAKLRAQCEITKRVLSNGTTASAAVDSLADGIDFHSSINRLRYDLAASATLNRMADLVTEAVEKANMEPFDISEVILAGGASNTPKLTSLMESIFPEQTIIRSSSSVTPLQLDPSELTAIGSGVQASLIGHFDAADIAASTDAQVVDVPHLTAPIGINEGENFVTIFDIETALPARKTVEVIAPKEGAAFIPIYEAERSVKVTKVEPEPIDEEEAFSDDEEEEPEEIKERIAIPKTLIATITLPDVSPNAKIELVLQIDAEGKLTASARPKDGKGTNVRGSTA.

39–46 (AFNRDGKT) contacts ATP. Phosphoserine occurs at positions 86 and 500.

It belongs to the heat shock protein 70 family.

This Schizosaccharomyces pombe (strain 972 / ATCC 24843) (Fission yeast) protein is Heat shock protein 70 homolog C57A7.12.